The sequence spans 383 residues: Erythronate-4-phosphate dehydrogenase (383 aa).

Residues S45 and T66 each contribute to the substrate site. NAD(+)-binding positions include D146, T174, 205-207 (ASR), and D231. Residue R207 is part of the active site. Residue E236 is part of the active site. H253 acts as the Proton donor in catalysis. Residue G256 participates in NAD(+) binding. Y257 serves as a coordination point for substrate.

The protein belongs to the D-isomer specific 2-hydroxyacid dehydrogenase family. PdxB subfamily. As to quaternary structure, homodimer.

The protein resides in the cytoplasm. The catalysed reaction is 4-phospho-D-erythronate + NAD(+) = (R)-3-hydroxy-2-oxo-4-phosphooxybutanoate + NADH + H(+). It participates in cofactor biosynthesis; pyridoxine 5'-phosphate biosynthesis; pyridoxine 5'-phosphate from D-erythrose 4-phosphate: step 2/5. Functionally, catalyzes the oxidation of erythronate-4-phosphate to 3-hydroxy-2-oxo-4-phosphonooxybutanoate. In Pseudomonas entomophila (strain L48), this protein is Erythronate-4-phosphate dehydrogenase.